The following is a 265-amino-acid chain: 4-hydroxy-tetrahydrodipicolinate reductase (265 aa).

NAD(+) is bound by residues 7-12 (GASGRM) and aspartate 33. Arginine 34 provides a ligand contact to NADP(+). Residues 96 to 98 (GTT) and 120 to 123 (AANM) contribute to the NAD(+) site. The active-site Proton donor/acceptor is histidine 153. Residue histidine 154 coordinates (S)-2,3,4,5-tetrahydrodipicolinate. The active-site Proton donor is the lysine 157. 163 to 164 (GT) serves as a coordination point for (S)-2,3,4,5-tetrahydrodipicolinate.

This sequence belongs to the DapB family.

The protein localises to the cytoplasm. The enzyme catalyses (S)-2,3,4,5-tetrahydrodipicolinate + NAD(+) + H2O = (2S,4S)-4-hydroxy-2,3,4,5-tetrahydrodipicolinate + NADH + H(+). It catalyses the reaction (S)-2,3,4,5-tetrahydrodipicolinate + NADP(+) + H2O = (2S,4S)-4-hydroxy-2,3,4,5-tetrahydrodipicolinate + NADPH + H(+). The protein operates within amino-acid biosynthesis; L-lysine biosynthesis via DAP pathway; (S)-tetrahydrodipicolinate from L-aspartate: step 4/4. In terms of biological role, catalyzes the conversion of 4-hydroxy-tetrahydrodipicolinate (HTPA) to tetrahydrodipicolinate. This Burkholderia cenocepacia (strain ATCC BAA-245 / DSM 16553 / LMG 16656 / NCTC 13227 / J2315 / CF5610) (Burkholderia cepacia (strain J2315)) protein is 4-hydroxy-tetrahydrodipicolinate reductase.